The primary structure comprises 518 residues: GMP synthase [glutamine-hydrolyzing] (518 aa).

A Glutamine amidotransferase type-1 domain is found at Lys-13 to Asp-203. The Nucleophile role is filled by Cys-90. Residues His-177 and Glu-179 contribute to the active site. The 190-residue stretch at Trp-204–Arg-393 folds into the GMPS ATP-PPase domain. An ATP-binding site is contributed by Ser-231 to Ser-237.

Homodimer.

The catalysed reaction is XMP + L-glutamine + ATP + H2O = GMP + L-glutamate + AMP + diphosphate + 2 H(+). The protein operates within purine metabolism; GMP biosynthesis; GMP from XMP (L-Gln route): step 1/1. In terms of biological role, catalyzes the synthesis of GMP from XMP. This is GMP synthase [glutamine-hydrolyzing] from Listeria monocytogenes serovar 1/2a (strain ATCC BAA-679 / EGD-e).